We begin with the raw amino-acid sequence, 1111 residues long: Cellulose synthase-like protein D4 (1111 aa).

2 disordered regions span residues 1–26 (MAST…KFAR) and 175–202 (DYSS…MMKR). Polar residues predominate over residues 192–202 (GNNNNMSMMKR). The next 2 helical transmembrane spans lie at 266–286 (AIIS…CFFL) and 297–317 (AIWL…SWIL). Residues D397 and D809 contribute to the active site. Transmembrane regions (helical) follow at residues 891 to 911 (LFLI…QFIV), 914 to 934 (LSIS…GLAV), 963 to 983 (LYAV…SFTL), 1007 to 1027 (LMIP…VAFI), 1040 to 1060 (LIGG…FAKG), and 1070 to 1090 (TIVF…WTAI).

It belongs to the glycosyltransferase 2 family. Plant cellulose synthase-like D subfamily.

It is found in the golgi apparatus membrane. Functionally, thought to be a Golgi-localized beta-glycan synthase that polymerize the backbones of noncellulosic polysaccharides (hemicelluloses) of plant cell wall. The sequence is that of Cellulose synthase-like protein D4 (CSLD4) from Arabidopsis thaliana (Mouse-ear cress).